The primary structure comprises 223 residues: Serine/threonine/tyrosine-interacting protein B (223 aa).

In terms of domain architecture, Tyrosine-protein phosphatase spans 28–176 (EMQEILPGLF…LQEYEAIYLA (149 aa)).

This sequence belongs to the protein-tyrosine phosphatase family. Non-receptor class subfamily.

Functionally, catalytically inactive phosphatase. The chain is Serine/threonine/tyrosine-interacting protein B (styx-b) from Xenopus laevis (African clawed frog).